The chain runs to 214 residues: Glutathione S-transferase F12 (214 aa).

In terms of domain architecture, GST N-terminal spans 2–82; that stretch reads VVKLYGQVTA…YYATKFADQG (81 aa). Glutathione is bound by residues 11-12, 40-41, 53-54, and 66-67; these read AA, QK, QV, and ES. The GST C-terminal domain occupies 89–214; that stretch reads SLEHRAIVDQ…WKKLMVLAGH (126 aa).

It belongs to the GST superfamily. Phi family.

It localises to the cytoplasm. Its subcellular location is the cytosol. The enzyme catalyses RX + glutathione = an S-substituted glutathione + a halide anion + H(+). In terms of biological role, involved in the transport and/or accumulation of both anthocyanins and proanthocyanidins (PA)s in the vacuole. Functions in the cytosol to maintain the regular accumulation in the vacuole of PA precursors, such as epicatechin and glycosylated epicatechin. This Arabidopsis thaliana (Mouse-ear cress) protein is Glutathione S-transferase F12.